The chain runs to 202 residues: MPEETQVHVVRHGEVHNPTGILYGRLPGFHLSATGAAQAAAVADALADRDIVAVIASPLQRAQETAAPIAARHDLAVETDPDLIESANFFEGRRVGPGDGAWRDPRVWWQLRNPFTPSWGEPYVDIAARMTTAVDKARVRGAGHEVVCVSHQLPVWTLRLYLTGKRLWHDPRRRDCALASVTSLIYDGDRLVDVVYSQPAAL.

An Isoglutamyl lysine isopeptide (Lys-Gln) (interchain with Q-Cter in protein Pup) cross-link involves residue Lys136.

This is an uncharacterized protein from Mycobacterium tuberculosis (strain ATCC 25618 / H37Rv).